Reading from the N-terminus, the 1507-residue chain is Chromatin-remodeling ATPase INO80 (1507 aa).

2 disordered regions span residues 30 to 82 and 428 to 452; these read PEDE…DAED and RKKQ…KRQQ. Residues 38–67 are compositionally biased toward polar residues; that stretch reads GSSSQDESRSTQGGVVANYSNGSKSRMNAS. A DBINO domain is found at 350–475; it reads AWINIVRRDI…SHFMQNKTDS (126 aa). Over residues 428–450 the composition is skewed to basic and acidic residues; that stretch reads RKKQEKEAAEAFKREQEQRESKR. Residues 598–769 enclose the Helicase ATP-binding domain; it reads VNCYEQGLNG…WALLHFIMPM (172 aa). 611–618 serves as a coordination point for ATP; it reads DEMGLGKT. The Helicase C-terminal domain maps to 1210–1360; that stretch reads TLDILLKRLR…QLVMTGGHVQ (151 aa). The segment at 1415–1507 is disordered; sequence LEELEDVDRQ…KGFDPSSSAN (93 aa). A compositionally biased stretch (polar residues) spans 1491–1507; the sequence is ASVTESNKGFDPSSSAN.

It belongs to the SNF2/RAD54 helicase family. As to quaternary structure, component of the INO80 chromatin-remodeling complex. Associates with REF6/EIN6.

The protein localises to the nucleus. It carries out the reaction ATP + H2O = ADP + phosphate + H(+). Its function is as follows. ATPase component of the chromatin remodeling INO80 complex which is involved in transcriptional regulation, DNA replication and DNA repair. Binds DNA. As part of the INO80 complex, remodels chromatin by shifting nucleosomes. The INO80 complex controls ethylene-induced H2A.Z eviction dynamics. Positive regulator of homologous recombination, but not an essential component of homologous recombination. Not involved in the illegitimate repair pathway. The sequence is that of Chromatin-remodeling ATPase INO80 from Arabidopsis thaliana (Mouse-ear cress).